A 322-amino-acid chain; its full sequence is Transmembrane and ubiquitin-like domain-containing protein 2 (322 aa).

Residues 38 to 58 (VVAGVVVLILALVLAWLSTYV) form a helical membrane-spanning segment. A disordered region spans residues 88 to 168 (VAGQGTPEPT…VRSEDSTCLP (81 aa)). Over residues 115–130 (EGGGDPTGEPGAGGGV) the composition is skewed to gly residues. The Ubiquitin-like domain occupies 174–247 (ISVRLKFFND…IHCHRSPPGS (74 aa)). The next 2 membrane-spanning stretches (helical) occupy residues 267 to 287 (LGVS…GVVW) and 296 to 316 (FFTA…SFLV).

The protein localises to the membrane. This Bos taurus (Bovine) protein is Transmembrane and ubiquitin-like domain-containing protein 2 (TMUB2).